Here is a 978-residue protein sequence, read N- to C-terminus: Exocyst complex component 5 (978 aa).

A compositionally biased stretch (polar residues) spans 1 to 11 (MSWARNIQSRI). 2 disordered regions span residues 1–87 (MSWA…TTTQ) and 122–246 (TSPS…TTPY). Composition is skewed to low complexity over residues 36–52 (PSSPTLSALSSPITSLT) and 62–86 (SQPTTNTTSLTSTSPPSPTISTTTT). Positions 122 to 142 (TSPSMASPIGTSTGIQNPNAK) are enriched in polar residues. Residues 143 to 245 (PSSLPSPSQS…QPTPIKQTTP (103 aa)) show a composition bias toward low complexity. Residues 303 to 325 (NTQLQLSQLESNIDRRLDDLAEE) are a coiled coil.

It belongs to the SEC10 family. In terms of assembly, the exocyst complex is composed of sec3/exoc1, sec5/exoc2, sec6/exoc3, sec8/exoc4, sec10/exoc5, sec15/exoc6, exo70/exoc7 and exo84/exoc8.

In terms of biological role, component of the exocyst complex involved in the docking of exocytic vesicles with fusion sites on the plasma membrane. This is Exocyst complex component 5 (exoc5) from Dictyostelium discoideum (Social amoeba).